The following is a 313-amino-acid chain: MHSYTLLAPAKINLYLEIVGDRPDGFHELVMVMQTVALCDRITLRPNGLQEFRLFCHHPLVPQDSSNLAHRAATLMAKEFPRLFANYGGIDITIEKYIPVAAGLAGGSTNAAAVLVGIDLIWELGLTRPELETLAARLGSDTSFCVTGGTVICTGRGEILDPIAPLTGLWVILAKYDHLSVSTPWAYQSYRQKFQDTYLSSPEDFHHRRQQVSSGALVQAIAQKKPAAIGKFIHNDLEKVVLPEFPLVAELRQVLGDLGGLGTMMSGSGPTVFTLCSSQEVAETIVKEAREILVAPDLQFWIAPITDTGIQVT.

Lys-11 is an active-site residue. Residue 99 to 109 (PVAAGLAGGST) participates in ATP binding. Asp-141 is an active-site residue.

It belongs to the GHMP kinase family. IspE subfamily.

It carries out the reaction 4-CDP-2-C-methyl-D-erythritol + ATP = 4-CDP-2-C-methyl-D-erythritol 2-phosphate + ADP + H(+). Its pathway is isoprenoid biosynthesis; isopentenyl diphosphate biosynthesis via DXP pathway; isopentenyl diphosphate from 1-deoxy-D-xylulose 5-phosphate: step 3/6. Its function is as follows. Catalyzes the phosphorylation of the position 2 hydroxy group of 4-diphosphocytidyl-2C-methyl-D-erythritol. The protein is 4-diphosphocytidyl-2-C-methyl-D-erythritol kinase of Microcystis aeruginosa (strain NIES-843 / IAM M-2473).